Consider the following 501-residue polypeptide: Probable cytosol aminopeptidase (501 aa).

Positions 268 and 273 each coordinate Mn(2+). Lysine 280 is a catalytic residue. Residues aspartate 291, aspartate 350, and glutamate 352 each coordinate Mn(2+). The active site involves arginine 354.

This sequence belongs to the peptidase M17 family. Mn(2+) serves as cofactor.

Its subcellular location is the cytoplasm. It catalyses the reaction Release of an N-terminal amino acid, Xaa-|-Yaa-, in which Xaa is preferably Leu, but may be other amino acids including Pro although not Arg or Lys, and Yaa may be Pro. Amino acid amides and methyl esters are also readily hydrolyzed, but rates on arylamides are exceedingly low.. It carries out the reaction Release of an N-terminal amino acid, preferentially leucine, but not glutamic or aspartic acids.. In terms of biological role, presumably involved in the processing and regular turnover of intracellular proteins. Catalyzes the removal of unsubstituted N-terminal amino acids from various peptides. The sequence is that of Probable cytosol aminopeptidase from Idiomarina loihiensis (strain ATCC BAA-735 / DSM 15497 / L2-TR).